The primary structure comprises 347 residues: Histidinol-phosphate aminotransferase (347 aa).

K209 carries the N6-(pyridoxal phosphate)lysine modification.

The protein belongs to the class-II pyridoxal-phosphate-dependent aminotransferase family. Histidinol-phosphate aminotransferase subfamily. Homodimer. The cofactor is pyridoxal 5'-phosphate.

The catalysed reaction is L-histidinol phosphate + 2-oxoglutarate = 3-(imidazol-4-yl)-2-oxopropyl phosphate + L-glutamate. It functions in the pathway amino-acid biosynthesis; L-histidine biosynthesis; L-histidine from 5-phospho-alpha-D-ribose 1-diphosphate: step 7/9. This is Histidinol-phosphate aminotransferase from Geotalea daltonii (strain DSM 22248 / JCM 15807 / FRC-32) (Geobacter daltonii).